Reading from the N-terminus, the 219-residue chain is Phosphatidylserine decarboxylase proenzyme (219 aa).

The Schiff-base intermediate with substrate; via pyruvic acid role is filled by Ser-188. Ser-188 carries the post-translational modification Pyruvic acid (Ser); by autocatalysis.

Belongs to the phosphatidylserine decarboxylase family. PSD-A subfamily. Heterodimer of a large membrane-associated beta subunit and a small pyruvoyl-containing alpha subunit. Pyruvate serves as cofactor. Is synthesized initially as an inactive proenzyme. Formation of the active enzyme involves a self-maturation process in which the active site pyruvoyl group is generated from an internal serine residue via an autocatalytic post-translational modification. Two non-identical subunits are generated from the proenzyme in this reaction, and the pyruvate is formed at the N-terminus of the alpha chain, which is derived from the carboxyl end of the proenzyme. The post-translation cleavage follows an unusual pathway, termed non-hydrolytic serinolysis, in which the side chain hydroxyl group of the serine supplies its oxygen atom to form the C-terminus of the beta chain, while the remainder of the serine residue undergoes an oxidative deamination to produce ammonia and the pyruvoyl prosthetic group on the alpha chain.

It is found in the cell membrane. The enzyme catalyses a 1,2-diacyl-sn-glycero-3-phospho-L-serine + H(+) = a 1,2-diacyl-sn-glycero-3-phosphoethanolamine + CO2. The protein operates within phospholipid metabolism; phosphatidylethanolamine biosynthesis; phosphatidylethanolamine from CDP-diacylglycerol: step 2/2. Its function is as follows. Catalyzes the formation of phosphatidylethanolamine (PtdEtn) from phosphatidylserine (PtdSer). The protein is Phosphatidylserine decarboxylase proenzyme of Trichlorobacter lovleyi (strain ATCC BAA-1151 / DSM 17278 / SZ) (Geobacter lovleyi).